Consider the following 912-residue polypeptide: Type II beta methyltransferase M.BslI (912 aa).

Belongs to the N(4)/N(6)-methyltransferase family. N(4) subfamily.

The enzyme catalyses a 2'-deoxycytidine in DNA + S-adenosyl-L-methionine = an N(4)-methyl-2'-deoxycytidine in DNA + S-adenosyl-L-homocysteine + H(+). Its function is as follows. A beta subtype methylase. Recognizes the double-stranded sequence 5'-CCN(7)GG-3', methylates C-2 on both strands, and protects the DNA from cleavage by the BslI endonuclease. The chain is Type II beta methyltransferase M.BslI (bslIM) from Bacillus sp. (strain NEB-606).